The sequence spans 288 residues: 2-hydroxy-6-oxononadienedioate/2-hydroxy-6-oxononatrienedioate hydrolase (288 aa).

The active-site Proton acceptor is His-267.

Belongs to the AB hydrolase superfamily. MhpC family. In terms of assembly, homodimer.

The catalysed reaction is (2Z,4E)-2-hydroxy-6-oxonona-2,4-dienedioate + H2O = (2Z)-2-hydroxypenta-2,4-dienoate + succinate + H(+). The enzyme catalyses (2Z,4E,7E)-2-hydroxy-6-oxonona-2,4,7-trienedioate + H2O = (2Z)-2-hydroxypenta-2,4-dienoate + fumarate + H(+). The protein operates within aromatic compound metabolism; 3-phenylpropanoate degradation. Its function is as follows. Catalyzes the cleavage of the C5-C6 bond of 2-hydroxy-6-oxononadienedioate and 2-hydroxy-6-oxononatrienedioate, a dienol ring fission product of the bacterial meta-cleavage pathway for degradation of phenylpropionic acid. The chain is 2-hydroxy-6-oxononadienedioate/2-hydroxy-6-oxononatrienedioate hydrolase from Klebsiella pneumoniae subsp. pneumoniae (strain ATCC 700721 / MGH 78578).